Consider the following 340-residue polypeptide: MPGWLTLPTLCRFLLWAFTIFHKAQGDPASHPGPHYLLPPIHEVIHSHRGATATLPCVLGTTPPSYKVRWSKVEPGELRETLILITNGLHARGYGPLGGRARMRRGHRLDASLVIAGVRLEDEGRYRCELINGIEDESVALTLSLEGVVFPYQPSRGRYQFNYYEAKQACEEQDGRLATYSQLYQAWTEGLDWCNAGWLLEGSVRYPVLTARAPCGGRGRPGIRSYGPRDRMRDRYDAFCFTSALAGQVFFVPGRLTLSEAHAACRRRGAVVAKVGHLYAAWKFSGLDQCDGGWLADGSVRFPITTPRPRCGGLPDPGVRSFGFPRPQQAAYGTYCYAEN.

The N-terminal stretch at 1 to 26 (MPGWLTLPTLCRFLLWAFTIFHKAQG) is a signal peptide. Residues 34-144 (PHYLLPPIHE…EDESVALTLS (111 aa)) form the Ig-like V-type domain. Intrachain disulfides connect Cys-57/Cys-128, Cys-170/Cys-240, Cys-194/Cys-215, Cys-265/Cys-336, and Cys-290/Cys-311. Link domains lie at 148–242 (VVFP…FCFT) and 245–338 (LAGQ…YCYA).

The protein belongs to the HAPLN family. Expressed only in adult brain.

The protein localises to the secreted. It localises to the extracellular space. Its subcellular location is the extracellular matrix. In terms of biological role, mediates a firm binding of versican V2 to hyaluronic acid. May play a pivotal role in the formation of the hyaluronan-associated matrix in the central nervous system (CNS) which facilitates neuronal conduction and general structural stabilization. Binds to hyaluronic acid. This is Hyaluronan and proteoglycan link protein 2 (HAPLN2) from Homo sapiens (Human).